The chain runs to 365 residues: tRNA(Met) cytidine acetate ligase (365 aa).

ATP contacts are provided by residues 7–20 (IAEF…HKYL), Gly96, Asn152, and Arg175.

The protein belongs to the TmcAL family.

Its subcellular location is the cytoplasm. It carries out the reaction cytidine(34) in elongator tRNA(Met) + acetate + ATP = N(4)-acetylcytidine(34) in elongator tRNA(Met) + AMP + diphosphate. Catalyzes the formation of N(4)-acetylcytidine (ac(4)C) at the wobble position of elongator tRNA(Met), using acetate and ATP as substrates. First activates an acetate ion to form acetyladenylate (Ac-AMP) and then transfers the acetyl group to tRNA to form ac(4)C34. This Streptococcus pneumoniae (strain P1031) protein is tRNA(Met) cytidine acetate ligase.